Here is a 354-residue protein sequence, read N- to C-terminus: Uroporphyrinogen decarboxylase (354 aa).

Substrate-binding positions include 35-39 (RQAGR), aspartate 84, tyrosine 159, serine 214, and histidine 333.

Belongs to the uroporphyrinogen decarboxylase family. As to quaternary structure, homodimer.

It is found in the cytoplasm. The catalysed reaction is uroporphyrinogen III + 4 H(+) = coproporphyrinogen III + 4 CO2. The protein operates within porphyrin-containing compound metabolism; protoporphyrin-IX biosynthesis; coproporphyrinogen-III from 5-aminolevulinate: step 4/4. In terms of biological role, catalyzes the decarboxylation of four acetate groups of uroporphyrinogen-III to yield coproporphyrinogen-III. This Nocardia farcinica (strain IFM 10152) protein is Uroporphyrinogen decarboxylase.